An 875-amino-acid polypeptide reads, in one-letter code: Phosphoenolpyruvate carboxylase (875 aa).

Active-site residues include histidine 137 and lysine 542.

This sequence belongs to the PEPCase type 1 family. It depends on Mg(2+) as a cofactor.

It catalyses the reaction oxaloacetate + phosphate = phosphoenolpyruvate + hydrogencarbonate. In terms of biological role, forms oxaloacetate, a four-carbon dicarboxylic acid source for the tricarboxylic acid cycle. The polypeptide is Phosphoenolpyruvate carboxylase (Pseudomonas entomophila (strain L48)).